Here is a 247-residue protein sequence, read N- to C-terminus: uncharacterized protein (247 aa).

Positions 11-85 (GMSIGAVLDL…LKVIRAQLDA (75 aa)) constitute an HTH merR-type domain. Positions 14–38 (IGAVLDLLRPDFPDVTISKIRFLEA) form a DNA-binding region, H-T-H motif.

Homodimer.

Functionally, transcriptional regulator that binds to its own promoter and thus may play a role in the regulation of the cotranscribed genes Rv1827 and Rv1828. Can also bind several promoter regions of genes that are essential, including ftsZ. Binds to the imperfect everted repeat sequence CTCAA through its winged-HTH motif. This is an uncharacterized protein from Mycobacterium tuberculosis (strain ATCC 25618 / H37Rv).